A 397-amino-acid chain; its full sequence is Elongation factor Tu 1 (397 aa).

In terms of domain architecture, tr-type G spans 10 to 206 (KPHVNIGTIG…AVDENIPQPE (197 aa)). The interval 19–26 (GHIDHGKT) is G1. 19–26 (GHIDHGKT) is a binding site for GTP. Thr26 contacts Mg(2+). Residues 62–66 (GITIS) form a G2 region. A G3 region spans residues 83-86 (DCPG). GTP-binding positions include 83–87 (DCPGH) and 138–141 (NKAD). The segment at 138–141 (NKAD) is G4. The segment at 176–178 (SAL) is G5.

It belongs to the TRAFAC class translation factor GTPase superfamily. Classic translation factor GTPase family. EF-Tu/EF-1A subfamily. In terms of assembly, monomer.

The protein resides in the cytoplasm. It carries out the reaction GTP + H2O = GDP + phosphate + H(+). GTP hydrolase that promotes the GTP-dependent binding of aminoacyl-tRNA to the A-site of ribosomes during protein biosynthesis. The protein is Elongation factor Tu 1 of Streptomyces avermitilis (strain ATCC 31267 / DSM 46492 / JCM 5070 / NBRC 14893 / NCIMB 12804 / NRRL 8165 / MA-4680).